The chain runs to 610 residues: Elongation factor 4 (610 aa).

The tr-type G domain maps to alanine 14–glutamine 198. GTP is bound by residues aspartate 26 to threonine 31 and asparagine 145 to aspartate 148.

The protein belongs to the TRAFAC class translation factor GTPase superfamily. Classic translation factor GTPase family. LepA subfamily.

The protein resides in the cell inner membrane. The enzyme catalyses GTP + H2O = GDP + phosphate + H(+). Its function is as follows. Required for accurate and efficient protein synthesis under certain stress conditions. May act as a fidelity factor of the translation reaction, by catalyzing a one-codon backward translocation of tRNAs on improperly translocated ribosomes. Back-translocation proceeds from a post-translocation (POST) complex to a pre-translocation (PRE) complex, thus giving elongation factor G a second chance to translocate the tRNAs correctly. Binds to ribosomes in a GTP-dependent manner. The protein is Elongation factor 4 of Nitrobacter hamburgensis (strain DSM 10229 / NCIMB 13809 / X14).